The primary structure comprises 1074 residues: Calcium-transporting ATPase 8, plasma membrane-type (1074 aa).

Positions 1 to 33 (MTSLLKSSPGRRRGGDVESGKSEHADSDSDTFY) are disordered. At 1 to 180 (MTSLLKSSPG…NTYPRKKGKG (180 aa)) the chain is on the cytoplasmic side. Residues 13–27 (RGGDVESGKSEHADS) show a composition bias toward basic and acidic residues. The segment at 43-54 (RLQQWRKAALVL) is interaction with calmodulin. The helical transmembrane segment at 181–201 (FLRFLWDACHDLTLIILMVAA) threads the bilayer. The Extracellular portion of the chain corresponds to 202–219 (VASLALGIKTEGIKEGWY). The helical transmembrane segment at 220 to 240 (DGGSIAFAVILVIVVTAVSDY) threads the bilayer. At 241–369 (KQSLQFQNLN…GEETPLQVRL (129 aa)) the chain is on the cytoplasmic side. The chain crosses the membrane as a helical span at residues 370-389 (NGVATFIGSIGLAVAAAVLV). Topologically, residues 390–426 (ILLTRYFTGHTKDNNGGPQFVKGKTKVGHVIDDVVKV) are extracellular. The chain crosses the membrane as a helical span at residues 427–444 (LTVAVTIVVVAVPEGLPL). Topologically, residues 445-840 (AVTLTLAYSM…RWGRSVYANI (396 aa)) are cytoplasmic. Asp482 (4-aspartylphosphate intermediate) is an active-site residue. Residues Asp785 and Asp789 each coordinate Mg(2+). Residues 841-859 (QKFIQFQLTVNVAALVINV) traverse the membrane as a helical segment. Topologically, residues 860–870 (VAAISSGDVPL) are extracellular. Residues 871-891 (TAVQLLWVNLIMDTLGALALA) traverse the membrane as a helical segment. Topologically, residues 892–911 (TEPPTDHLMGRPPVGRKEPL) are cytoplasmic. The chain crosses the membrane as a helical span at residues 912–934 (ITNIMWRNLLIQAIYQVSVLLTL). The Extracellular portion of the chain corresponds to 935 to 949 (NFRGISILGLEHEVH). Residues 950–971 (EHATRVKNTIIFNAFVLCQAFN) form a helical membrane-spanning segment. The Cytoplasmic segment spans residues 972–989 (EFNARKPDEKNIFKGVIK). A helical membrane pass occupies residues 990–1011 (NRLFMGIIVITLVLQVIIVEFL). Over 1012-1021 (GKFASTTKLN) the chain is Extracellular. The chain crosses the membrane as a helical span at residues 1022 to 1043 (WKQWLICVGIGVISWPLALVGK). Over 1044-1074 (FIPVPAAPISNKLKVLKFWGKKKNSSGEGSL) the chain is Cytoplasmic.

It belongs to the cation transport ATPase (P-type) (TC 3.A.3) family. Type IIB subfamily.

The protein resides in the cell membrane. It catalyses the reaction Ca(2+)(in) + ATP + H2O = Ca(2+)(out) + ADP + phosphate + H(+). Its activity is regulated as follows. Activated by calmodulin. In terms of biological role, this magnesium-dependent enzyme catalyzes the hydrolysis of ATP coupled with the translocation of calcium from the cytosol out of the cell. The polypeptide is Calcium-transporting ATPase 8, plasma membrane-type (ACA8) (Arabidopsis thaliana (Mouse-ear cress)).